The chain runs to 290 residues: Appressorium protein ROW2 (290 aa).

An N-terminal signal peptide occupies residues 1–19 (MFTKSVFIALVAGVLGVTA). The disordered stretch occupies residues 266 to 290 (AIKTPSKRSVMATHVKRSPEWEEEP).

The protein localises to the secreted. It localises to the nucleus. Functionally, plays a role in the formation of the appressorium, a specialized infection structure with the purpose of penetrating the host surface, and is required for proper remodeling of the appressorium wall and vesicle secretion. This chain is Appressorium protein ROW2, found in Mycosarcoma maydis (Corn smut fungus).